The chain runs to 774 residues: Lon protease 1 (774 aa).

The Lon N-terminal domain maps to 9 to 202 (IPLLPLRGLL…KVIDFINNEK (194 aa)). ATP is bound at residue 354–361 (GPPGVGKT). A Lon proteolytic domain is found at 590–771 (EDQVGVVTGL…DEVLEHALVG (182 aa)). Catalysis depends on residues serine 677 and lysine 720.

It belongs to the peptidase S16 family. Homohexamer. Organized in a ring with a central cavity. Exists as a mixture of small oligomeric species in solution.

It localises to the cytoplasm. The enzyme catalyses Hydrolysis of proteins in presence of ATP.. ATP-dependent serine protease that mediates the selective degradation of mutant and abnormal proteins as well as certain short-lived regulatory proteins. Required for cellular homeostasis and for survival from DNA damage and developmental changes induced by stress. Degrades polypeptides processively to yield small peptide fragments that are 5 to 10 amino acids long. Binds to DNA in a double-stranded, site-specific manner. Has been implicated in preventing sigma(G) activity under non-sporulation conditions. The sequence is that of Lon protease 1 from Bacillus subtilis (strain 168).